Here is a 456-residue protein sequence, read N- to C-terminus: Phosphomethylpyrimidine synthase (456 aa).

Residues asparagine 80, methionine 109, tyrosine 139, histidine 175, 195 to 197 (SRG), 236 to 239 (DSLR), and glutamate 275 each bind substrate. Histidine 279 serves as a coordination point for Zn(2+). Tyrosine 302 is a substrate binding site. A Zn(2+)-binding site is contributed by histidine 343. Cysteine 423, cysteine 426, and cysteine 431 together coordinate [4Fe-4S] cluster.

It belongs to the ThiC family. [4Fe-4S] cluster is required as a cofactor.

It catalyses the reaction 5-amino-1-(5-phospho-beta-D-ribosyl)imidazole + S-adenosyl-L-methionine = 4-amino-2-methyl-5-(phosphooxymethyl)pyrimidine + CO + 5'-deoxyadenosine + formate + L-methionine + 3 H(+). It participates in cofactor biosynthesis; thiamine diphosphate biosynthesis. In terms of biological role, catalyzes the synthesis of the hydroxymethylpyrimidine phosphate (HMP-P) moiety of thiamine from aminoimidazole ribotide (AIR) in a radical S-adenosyl-L-methionine (SAM)-dependent reaction. The protein is Phosphomethylpyrimidine synthase of Prochlorococcus marinus (strain MIT 9215).